The chain runs to 115 residues: General stress protein 17M (115 aa).

The chain is General stress protein 17M (yflT) from Bacillus subtilis (strain 168).